The sequence spans 65 residues: Large ribosomal subunit protein bL33m (65 aa).

A mitochondrion-targeting transit peptide spans 1–8 (MFLSAVFF).

The protein belongs to the bacterial ribosomal protein bL33 family. Component of the mitochondrial large ribosomal subunit (mt-LSU). Mature mammalian 55S mitochondrial ribosomes consist of a small (28S) and a large (39S) subunit. The 28S small subunit contains a 12S ribosomal RNA (12S mt-rRNA) and 30 different proteins. The 39S large subunit contains a 16S rRNA (16S mt-rRNA), a copy of mitochondrial valine transfer RNA (mt-tRNA(Val)), which plays an integral structural role, and 52 different proteins.

Its subcellular location is the mitochondrion. This chain is Large ribosomal subunit protein bL33m (MRPL33), found in Homo sapiens (Human).